We begin with the raw amino-acid sequence, 483 residues long: Replication factor C large subunit (483 aa).

44-51 (GSPGVGKT) lines the ATP pocket. Positions 415-483 (AVDHGGGIFA…DGQAGLSDFM (69 aa)) are disordered. Residues 430 to 443 (AQSDTESDDDDDGD) show a composition bias toward acidic residues. Over residues 451–463 (DEPKEESVNREQS) the composition is skewed to basic and acidic residues.

It belongs to the activator 1 small subunits family. RfcL subfamily. As to quaternary structure, heteromultimer composed of small subunits (RfcS) and large subunits (RfcL).

Functionally, part of the RFC clamp loader complex which loads the PCNA sliding clamp onto DNA. The sequence is that of Replication factor C large subunit from Natronomonas pharaonis (strain ATCC 35678 / DSM 2160 / CIP 103997 / JCM 8858 / NBRC 14720 / NCIMB 2260 / Gabara) (Halobacterium pharaonis).